The primary structure comprises 363 residues: 24-methylenesterol C-methyltransferase 2 (363 aa).

The chain crosses the membrane as a helical span at residues 6–26 (MAWTAAGVGMALVYWFVWVMG).

The protein belongs to the class I-like SAM-binding methyltransferase superfamily. Erg6/SMT family.

Its subcellular location is the membrane. It catalyses the reaction 24-methylidenelophenol + S-adenosyl-L-methionine = (Z)-24-ethylidenelophenol + S-adenosyl-L-homocysteine + H(+). It functions in the pathway steroid biosynthesis; sterol biosynthesis. In terms of biological role, catalyzes the methyl transfer from S-adenosyl-methionine to the methylene group of 24-methylene lophenol to form 24-ethylidene lophenol. This chain is 24-methylenesterol C-methyltransferase 2 (Smt2-1), found in Oryza sativa subsp. japonica (Rice).